The primary structure comprises 193 residues: Ion-translocating oxidoreductase complex subunit A (193 aa).

The next 6 membrane-spanning stretches (helical) occupy residues 4–24 (LALI…KFLG), 38–58 (AMGM…CSYL), 65–85 (APLG…AVVV), 102–122 (VLGI…VALL), 134–154 (AVYG…FAAL), and 171–191 (SVAL…AGLV).

Belongs to the NqrDE/RnfAE family. In terms of assembly, the complex is composed of six subunits: RnfA, RnfB, RnfC, RnfD, RnfE and RnfG.

The protein resides in the cell inner membrane. In terms of biological role, part of a membrane-bound complex that couples electron transfer with translocation of ions across the membrane. The protein is Ion-translocating oxidoreductase complex subunit A of Alkalilimnicola ehrlichii (strain ATCC BAA-1101 / DSM 17681 / MLHE-1).